Reading from the N-terminus, the 497-residue chain is Keratin, type II cytoskeletal 8 (497 aa).

A head region spans residues 2-108 (TSYQRTVTVR…DPRIGQVRLE (107 aa)). The segment at 109-149 (EKEQIKTLNNQFAGFIDKVRYLEQQNKLLETKWQLLQNQTT) is coil 1A. Residues 109-421 (EKEQIKTLNN…KLLEGEESRL (313 aa)) enclose the IF rod domain. The tract at residues 145 to 162 (QNQTTPSRSNLDSMFEAY) is linker 1. Residues 163-254 (ISNLRRQLDT…QIYDEEIREL (92 aa)) form a coil 1B region. The segment at 255–278 (QTQIQDTSVIVQMDNNRQLDLDNI) is linker 12. The interval 279–417 (IAEVRAQYED…ATYRKLLEGE (139 aa)) is coil 2. The tract at residues 418 to 497 (ESRLASGIQA…VSERSNIVKE (80 aa)) is tail.

It belongs to the intermediate filament family. As to quaternary structure, heterotetramer of two type I and two type II keratins. Keratin-8 associates with keratin-18. In terms of tissue distribution, expressed in skin.

It localises to the cytoplasm. The protein localises to the nucleus. Its subcellular location is the nucleoplasm. The protein resides in the nucleus matrix. Together with KRT19, helps to link the contractile apparatus to dystrophin at the costameres of striated muscle. In Protopterus aethiopicus (Marbled lungfish), this protein is Keratin, type II cytoskeletal 8.